A 447-amino-acid chain; its full sequence is Tubulin beta-1 chain (447 aa).

Residues Gln-11, Glu-69, Ser-138, Gly-142, Thr-143, Gly-144, Asn-204, and Asn-226 each coordinate GTP. Glu-69 provides a ligand contact to Mg(2+).

Belongs to the tubulin family. In terms of assembly, dimer of alpha and beta chains. A typical microtubule is a hollow water-filled tube with an outer diameter of 25 nm and an inner diameter of 15 nM. Alpha-beta heterodimers associate head-to-tail to form protofilaments running lengthwise along the microtubule wall with the beta-tubulin subunit facing the microtubule plus end conferring a structural polarity. Microtubules usually have 13 protofilaments but different protofilament numbers can be found in some organisms and specialized cells. Mg(2+) serves as cofactor.

The protein resides in the cytoplasm. The protein localises to the cytoskeleton. Its function is as follows. Tubulin is the major constituent of microtubules, a cylinder consisting of laterally associated linear protofilaments composed of alpha- and beta-tubulin heterodimers. Microtubules grow by the addition of GTP-tubulin dimers to the microtubule end, where a stabilizing cap forms. Below the cap, tubulin dimers are in GDP-bound state, owing to GTPase activity of alpha-tubulin. The chain is Tubulin beta-1 chain from Geotrichum candidum (Oospora lactis).